The following is a 495-amino-acid chain: ATP synthase subunit beta, chloroplastic (495 aa).

Residue 172-179 (GGAGVGKT) participates in ATP binding.

Belongs to the ATPase alpha/beta chains family. F-type ATPases have 2 components, CF(1) - the catalytic core - and CF(0) - the membrane proton channel. CF(1) has five subunits: alpha(3), beta(3), gamma(1), delta(1), epsilon(1). CF(0) has four main subunits: a(1), b(1), b'(1) and c(9-12).

It is found in the plastid. It localises to the chloroplast thylakoid membrane. The enzyme catalyses ATP + H2O + 4 H(+)(in) = ADP + phosphate + 5 H(+)(out). Produces ATP from ADP in the presence of a proton gradient across the membrane. The catalytic sites are hosted primarily by the beta subunits. This Hyacinthus orientalis (Common hyacinth) protein is ATP synthase subunit beta, chloroplastic.